The sequence spans 161 residues: 2-C-methyl-D-erythritol 2,4-cyclodiphosphate synthase (161 aa).

A divalent metal cation contacts are provided by aspartate 10 and histidine 12. 4-CDP-2-C-methyl-D-erythritol 2-phosphate-binding positions include 10 to 12 (DVH) and 36 to 37 (HS). Residue histidine 44 participates in a divalent metal cation binding. Residues 58 to 60 (DIG), 63 to 67 (FSDTD), and arginine 144 contribute to the 4-CDP-2-C-methyl-D-erythritol 2-phosphate site.

The protein belongs to the IspF family. As to quaternary structure, homotrimer. A divalent metal cation is required as a cofactor.

It catalyses the reaction 4-CDP-2-C-methyl-D-erythritol 2-phosphate = 2-C-methyl-D-erythritol 2,4-cyclic diphosphate + CMP. It functions in the pathway isoprenoid biosynthesis; isopentenyl diphosphate biosynthesis via DXP pathway; isopentenyl diphosphate from 1-deoxy-D-xylulose 5-phosphate: step 4/6. Functionally, involved in the biosynthesis of isopentenyl diphosphate (IPP) and dimethylallyl diphosphate (DMAPP), two major building blocks of isoprenoid compounds. Catalyzes the conversion of 4-diphosphocytidyl-2-C-methyl-D-erythritol 2-phosphate (CDP-ME2P) to 2-C-methyl-D-erythritol 2,4-cyclodiphosphate (ME-CPP) with a corresponding release of cytidine 5-monophosphate (CMP). This chain is 2-C-methyl-D-erythritol 2,4-cyclodiphosphate synthase, found in Burkholderia lata (strain ATCC 17760 / DSM 23089 / LMG 22485 / NCIMB 9086 / R18194 / 383).